We begin with the raw amino-acid sequence, 648 residues long: MANLLGYVGRRSAPYVVRRFIGANNYRYYSASQNLKSNLSEPVGEDPIEPTEQASKGNINEVQDGLSKAEMNAEESVPWYLRDDSSSPLLENKNVELPFVPDHAPSSVNTFLELLSNEYGLEDIELFDLTQLDPENEYHADNQPTDYMIICTGKSEKHIYKASNELRTYIKHNYNLIPKIEGMASNSKTPAARRRMLRRARKGPLATDNDYGRTPNSWVMCDTAVNNTCIHILTDSRRDELNLETLWCREEDIEKYSTPESATEESDDIFIGIRRFHTMTPFARRFQQMRSYSASQSNESLESYLHKLTGESLTVDSLRQHIKGFESDFQQPTIKDYNTRFNFYRSIHIQNSDVMSLEKLTSILLDKYSSLQIILSNSIDLSKERTQDMVDFMKLLIDSPEIKKHFDLSNSKQMNSYSDELYDKLAQFVSSLFQFSKEQIDMSRHPEFLPLLWRLSFVQKNDTVIGSRMIDDIIYQEGDLPDLPGQPSIFQAKNRARDTLDLINYYNQKIDENASTTNSFKELLLFTYGNAGDWAKFWNTWEISFNLLNNSKIDSKSSIKNWVRLVVYLAIRNDRSAIVHFLNNYWNHSTSIAGSFIDDFELNNNVFNSDEEKRSFKNSVYKMLNSMNNDNESNPSFSNVKEFVDNLD.

A mitochondrion-targeting transit peptide spans 1–29 (MANLLGYVGRRSAPYVVRRFIGANNYRYY).

Belongs to the ATP25 family.

The protein localises to the mitochondrion inner membrane. Its function is as follows. Probable mitochondrial mRNA stabilization factor. This Debaryomyces hansenii (strain ATCC 36239 / CBS 767 / BCRC 21394 / JCM 1990 / NBRC 0083 / IGC 2968) (Yeast) protein is ATPase synthesis protein 25, mitochondrial (ATP25).